The following is a 206-amino-acid chain: Large ribosomal subunit protein uL4 (206 aa).

A compositionally biased stretch (polar residues) spans 42–54; sequence RRQQGTHQSQGRS. Residues 42 to 93 form a disordered region; sequence RRQQGTHQSQGRSDVSRTGAKMFKQKGTGRARHSSARAPQFRGGGKAHGPVV. Positions 64 to 76 are enriched in basic residues; sequence FKQKGTGRARHSS.

The protein belongs to the universal ribosomal protein uL4 family. In terms of assembly, part of the 50S ribosomal subunit.

In terms of biological role, one of the primary rRNA binding proteins, this protein initially binds near the 5'-end of the 23S rRNA. It is important during the early stages of 50S assembly. It makes multiple contacts with different domains of the 23S rRNA in the assembled 50S subunit and ribosome. Its function is as follows. Forms part of the polypeptide exit tunnel. This is Large ribosomal subunit protein uL4 from Bartonella henselae (strain ATCC 49882 / DSM 28221 / CCUG 30454 / Houston 1) (Rochalimaea henselae).